Reading from the N-terminus, the 312-residue chain is Plasma membrane-associated coenzyme Q6 reductase PGA3 (312 aa).

Over 1–15 (MSKEDIEGTNILDEP) the chain is Extracellular. A helical transmembrane segment spans residues 16–36 (VHGIYIPAALFVVGVAITTYM). Residues 37-39 (SGE) are Cytoplasmic-facing. Residues 40 to 60 (LKILWSLPILFMIIFVRAYSA) form a helical membrane-spanning segment. The Extracellular segment spans residues 61–179 (YKRRRSLYPD…LNYEPNSSKH (119 aa)). The FAD-binding FR-type domain occupies 70–173 (DRWTSLELED…KGPIGTLNYE (104 aa)). FAD is bound by residues 153–168 (AGLN…GPIG) and 179–211 (HLGI…KVSL). The chain crosses the membrane as a helical span at residues 180–200 (LGIVAGGSGITPVLQILNEII). Residues 201–312 (TVPEDLTKVS…SSGDDQVFVF (112 aa)) lie on the Cytoplasmic side of the membrane.

The protein belongs to the flavoprotein pyridine nucleotide cytochrome reductase family. FAD is required as a cofactor.

The protein resides in the cell membrane. The protein localises to the endoplasmic reticulum membrane. The enzyme catalyses 2 Fe(III)-[cytochrome b5] + NADH = 2 Fe(II)-[cytochrome b5] + NAD(+) + H(+). With respect to regulation, inhibited by diphenylene iodonium (DPI). Its function is as follows. NADH-dependent cytochrome b5 reductase that reduces coenzyme Q6 at the plasma membrane and mediates lifespan extension by calorie restriction by shifting fermentative to respiratory metabolism, probably through modulating the NAD(+)/NADH ratio. The protein is Plasma membrane-associated coenzyme Q6 reductase PGA3 (PGA3) of Saccharomyces cerevisiae (strain ATCC 204508 / S288c) (Baker's yeast).